Consider the following 989-residue polypeptide: ATP-dependent 6-phosphofructokinase subunit alpha (989 aa).

The N-terminal catalytic PFK domain 1 stretch occupies residues 1–585; that stretch reads MPEPSISALS…SYESFLSVSK (585 aa). Residues Gly-220, 283-284, and 313-316 each bind ATP; these read RS and GDGS. Mg(2+) is bound at residue Asp-314. Beta-D-fructose 6-phosphate contacts are provided by residues 359-361, Arg-396, 403-405, Glu-460, Arg-487, and 493-496; these read SID, MGR, and HVQR. Asp-361 functions as the Proton acceptor in the catalytic mechanism. An interdomain linker region spans residues 586-599; the sequence is YDDGSYLVPESSRL. A C-terminal regulatory PFK domain 2 region spans residues 600-989; that stretch reads NIAIIHVGAP…LSGRLSIRTT (390 aa). Residues Arg-670, 727-731, Arg-765, 772-774, Glu-832, Arg-858, 864-867, and Arg-963 each bind beta-D-fructose 2,6-bisphosphate; these read TVSNN, QGG, and HVQQ.

Belongs to the phosphofructokinase type A (PFKA) family. ATP-dependent PFK group I subfamily. Eukaryotic two domain clade 'E' sub-subfamily. As to quaternary structure, heterododecamer of 4 alpha, 4 beta and 4 gamma chains. The gamma chain bridges the N-terminal halves of the alpha and beta subunits. Mg(2+) serves as cofactor.

The protein localises to the cytoplasm. It carries out the reaction beta-D-fructose 6-phosphate + ATP = beta-D-fructose 1,6-bisphosphate + ADP + H(+). It functions in the pathway carbohydrate degradation; glycolysis; D-glyceraldehyde 3-phosphate and glycerone phosphate from D-glucose: step 3/4. Its activity is regulated as follows. Allosterically activated by ADP, AMP, or fructose 2,6-bisphosphate, and allosterically inhibited by ATP or citrate. Its function is as follows. Catalyzes the phosphorylation of D-fructose 6-phosphate to fructose 1,6-bisphosphate by ATP, the first committing step of glycolysis. Involved in the modulation of glucose-induced microautophagy of peroxisomes independent of its ability to metabolize glucose intermediates. In Komagataella phaffii (strain GS115 / ATCC 20864) (Yeast), this protein is ATP-dependent 6-phosphofructokinase subunit alpha (PFK1).